The chain runs to 135 residues: Ribonuclease P protein component (135 aa).

Belongs to the RnpA family. As to quaternary structure, consists of a catalytic RNA component (M1 or rnpB) and a protein subunit.

It catalyses the reaction Endonucleolytic cleavage of RNA, removing 5'-extranucleotides from tRNA precursor.. RNaseP catalyzes the removal of the 5'-leader sequence from pre-tRNA to produce the mature 5'-terminus. It can also cleave other RNA substrates such as 4.5S RNA. The protein component plays an auxiliary but essential role in vivo by binding to the 5'-leader sequence and broadening the substrate specificity of the ribozyme. In Pseudomonas paraeruginosa (strain DSM 24068 / PA7) (Pseudomonas aeruginosa (strain PA7)), this protein is Ribonuclease P protein component.